The primary structure comprises 396 residues: 12-oxophytodienoate reductase 3 (396 aa).

Residues 31–33 (PMT), Gly64, and Gln106 each bind FMN. 185–188 (HGAH) lines the substrate pocket. The active-site Proton donor is the Tyr190. An FMN-binding site is contributed by Arg237. Substrate is bound at residue Arg283. Residues Gly321 and 342–343 (GR) contribute to the FMN site. Residues 342 to 343 (GR) are FMN. Residues 394–396 (SRL) carry the Microbody targeting signal motif.

Belongs to the NADH:flavin oxidoreductase/NADH oxidase family. The cofactor is FMN. As to expression, expressed in roots and to a lower extent in leaves and flowers.

Its subcellular location is the peroxisome. It catalyses the reaction (1S,2S)-OPC-8 + NADP(+) = (9S,13S,15Z)-12-oxophyto-10,15-dienoate + NADPH + H(+). It functions in the pathway lipid metabolism; oxylipin biosynthesis. Functionally, specifically cleaves olefinic bonds in cyclic enones. Involved in the biosynthesis of jasmonic acid (JA) and perhaps in biosynthesis or metabolism of other oxylipin signaling moleclules. It is required for the spatial and temporal regulation of JA levels during dehiscence of anthers, promoting the stomium degeneration program. In vitro, reduces 9S,13S-12-oxophytodienoic acid (9S,13S-OPDA) and 9R,13R-OPDA to 9S,13S-OPC-8:0 and 9R,13R-OPC-8:0, respectively. This Solanum lycopersicum (Tomato) protein is 12-oxophytodienoate reductase 3 (OPR3).